A 548-amino-acid polypeptide reads, in one-letter code: Chaperonin GroEL (548 aa).

ATP is bound by residues 30–33, lysine 51, 87–91, glycine 415, 478–480, and aspartate 494; these read TLGP, DGTTT, and NAA.

Belongs to the chaperonin (HSP60) family. As to quaternary structure, forms a cylinder of 14 subunits composed of two heptameric rings stacked back-to-back. Interacts with the co-chaperonin GroES.

Its subcellular location is the cytoplasm. The catalysed reaction is ATP + H2O + a folded polypeptide = ADP + phosphate + an unfolded polypeptide.. Together with its co-chaperonin GroES, plays an essential role in assisting protein folding. The GroEL-GroES system forms a nano-cage that allows encapsulation of the non-native substrate proteins and provides a physical environment optimized to promote and accelerate protein folding. The polypeptide is Chaperonin GroEL (Janthinobacterium sp. (strain Marseille) (Minibacterium massiliensis)).